A 189-amino-acid chain; its full sequence is Rho-related protein racM (189 aa).

12-19 (GDYGVGKT) contacts GTP. An Effector region motif is present at residues 35–43 (YVPTALDNF). GTP contacts are provided by residues 60 to 64 (DTAGG) and 118 to 121 (TKID). Cysteine methyl ester is present on Cys-186. Residue Cys-186 is the site of S-geranylgeranyl cysteine attachment. Positions 187–189 (IIL) are cleaved as a propeptide — removed in mature form.

It belongs to the small GTPase superfamily. Rho family.

The protein localises to the cell membrane. The polypeptide is Rho-related protein racM (racM) (Dictyostelium discoideum (Social amoeba)).